The chain runs to 203 residues: RNA chaperone ProQ (203 aa).

The interval 111–138 (KAKRQALAPKKPAKKVAPKRAPAVKKER) is disordered.

Belongs to the ProQ family.

Its subcellular location is the cytoplasm. RNA chaperone with significant RNA binding, RNA strand exchange and RNA duplexing activities. This is RNA chaperone ProQ from Shewanella frigidimarina (strain NCIMB 400).